Here is a 329-residue protein sequence, read N- to C-terminus: Probable acyltransferase FabY (329 aa).

The 145-residue stretch at 18 to 162 (YHLRVPQTEE…RHFLMIKPVA (145 aa)) folds into the N-acetyltransferase domain.

The protein belongs to the acetyltransferase family. FabY subfamily.

It participates in lipid metabolism; fatty acid biosynthesis. Its function is as follows. Supports initiation of fatty acid biosynthesis in the absence of FabH. The polypeptide is Probable acyltransferase FabY (Escherichia coli O157:H7).